A 130-amino-acid chain; its full sequence is S-adenosylmethionine decarboxylase proenzyme (130 aa).

The active-site Schiff-base intermediate with substrate; via pyruvic acid is serine 64. Pyruvic acid (Ser); by autocatalysis is present on serine 64. Histidine 69 functions as the Proton acceptor; for processing activity in the catalytic mechanism. Cysteine 84 serves as the catalytic Proton donor; for catalytic activity.

This sequence belongs to the prokaryotic AdoMetDC family. Type 1 subfamily. Heterotetramer of two alpha and two beta chains arranged as a dimer of alpha/beta heterodimers. Requires pyruvate as cofactor. Post-translationally, is synthesized initially as an inactive proenzyme. Formation of the active enzyme involves a self-maturation process in which the active site pyruvoyl group is generated from an internal serine residue via an autocatalytic post-translational modification. Two non-identical subunits are generated from the proenzyme in this reaction, and the pyruvate is formed at the N-terminus of the alpha chain, which is derived from the carboxyl end of the proenzyme. The post-translation cleavage follows an unusual pathway, termed non-hydrolytic serinolysis, in which the side chain hydroxyl group of the serine supplies its oxygen atom to form the C-terminus of the beta chain, while the remainder of the serine residue undergoes an oxidative deamination to produce ammonia and the pyruvoyl group blocking the N-terminus of the alpha chain.

The catalysed reaction is S-adenosyl-L-methionine + H(+) = S-adenosyl 3-(methylsulfanyl)propylamine + CO2. It functions in the pathway amine and polyamine biosynthesis; S-adenosylmethioninamine biosynthesis; S-adenosylmethioninamine from S-adenosyl-L-methionine: step 1/1. In terms of biological role, catalyzes the decarboxylation of S-adenosylmethionine to S-adenosylmethioninamine (dcAdoMet), the propylamine donor required for the synthesis of the polyamines spermine and spermidine from the diamine putrescine. This Thermoplasma volcanium (strain ATCC 51530 / DSM 4299 / JCM 9571 / NBRC 15438 / GSS1) protein is S-adenosylmethionine decarboxylase proenzyme.